The chain runs to 66 residues: Large ribosomal subunit protein bL31 (66 aa).

Residues Cys16, Cys18, Cys36, and Cys39 each coordinate Zn(2+).

Belongs to the bacterial ribosomal protein bL31 family. Type A subfamily. In terms of assembly, part of the 50S ribosomal subunit. Requires Zn(2+) as cofactor.

Its function is as follows. Binds the 23S rRNA. In Campylobacter jejuni subsp. jejuni serotype O:6 (strain 81116 / NCTC 11828), this protein is Large ribosomal subunit protein bL31.